A 133-amino-acid polypeptide reads, in one-letter code: Homeobox protein BarH-like 2 (133 aa).

Residues 1–46 (ELEKEFQKQKYLSTPDRLDLAQSLGLTQLQVKTWYQNRRMKWKKMV) constitute a DNA-binding region (homeobox). Positions 45 to 133 (MVLKGGQEAP…VTSPEPPPSS (89 aa)) are disordered.

Belongs to the BAR homeobox family. As to expression, expressed in keratinizing epithelia such as wool follicle, tongue and esophagus. Expressed at low level in thymus. Not detected in spleen, skeletal muscle, brain, heart kidney, liver and lung.

The protein localises to the nucleus. Its function is as follows. Transcription factor. Binds optimally to the DNA consensus sequence 5'-YYTAATGRTTTTY-3'. May control the expression of neural adhesion molecules such as L1 or Ng-CAM during embryonic development of both the central and peripherical nervous system. May be involved in controlling adhesive processes in keratinizing epithelia. The chain is Homeobox protein BarH-like 2 (BARX2) from Ovis aries (Sheep).